A 1453-amino-acid chain; its full sequence is Scavenger receptor cysteine-rich type 1 protein M160 (1453 aa).

An N-terminal signal peptide occupies residues 1–40 (MMLPQNSWHIDFGRCCCHQNLFSAVVTCILLLNSCFLISS). Topologically, residues 41–1359 (FNGTDLELRL…LKSLNASSGH (1319 aa)) are extracellular. N-linked (GlcNAc...) asparagine glycosylation is found at Asn42, Asn78, Asn120, and Asn161. SRCR domains follow at residues 48–148 (LRLV…VNCY), 155–255 (LRLV…LTCY), 262–362 (LRLV…VICS), 369–469 (LRLA…VICS), 476–576 (LRLV…VTCS), 583–683 (LRLV…VICS), 690–790 (LRLV…LICS), 795–895 (PRLV…VVCS), and 900–1000 (VRLV…VICT). Disulfide bonds link Cys73-Cys137, Cys86-Cys147, and Cys117-Cys127. Cystine bridges form between Cys180–Cys244, Cys193–Cys254, Cys224–Cys234, Cys287–Cys351, Cys300–Cys361, and Cys331–Cys341. N-linked (GlcNAc...) asparagine glycans are attached at residues Asn334, Asn377, Asn441, Asn548, and Asn637. Disulfide bonds link Cys394/Cys458, Cys407/Cys468, Cys438/Cys448, Cys501/Cys565, Cys514/Cys575, Cys545/Cys555, Cys608/Cys672, Cys621/Cys682, Cys652/Cys662, Cys715/Cys779, Cys728/Cys789, Cys759/Cys769, Cys820/Cys884, Cys833/Cys894, Cys864/Cys874, Cys925/Cys989, Cys938/Cys999, and Cys969/Cys979. N-linked (GlcNAc...) asparagine glycosylation is found at Asn972, Asn1013, Asn1084, and Asn1104. 3 consecutive SRCR domains span residues 1036-1136 (LRLV…VICS), 1141-1243 (LRLY…ITCE), and 1246-1346 (IRVR…VRCS). Disulfide bonds link Cys1061–Cys1125, Cys1074–Cys1135, and Cys1105–Cys1115. Residues Asn1161 and Asn1171 are each glycosylated (N-linked (GlcNAc...) asparagine). 5 cysteine pairs are disulfide-bonded: Cys1181/Cys1242, Cys1212/Cys1222, Cys1271/Cys1335, Cys1284/Cys1345, and Cys1315/Cys1325. N-linked (GlcNAc...) asparagine glycosylation is found at Asn1318 and Asn1354. A helical transmembrane segment spans residues 1360 to 1380 (LALILSSIFGLLLLVLFILFL). Residues 1381 to 1453 (TWCRVQKQKH…GVLPASEATK (73 aa)) lie on the Cytoplasmic side of the membrane. Basic and acidic residues predominate over residues 1418–1435 (EDPHGTRTSDDTPNHGCE). Positions 1418–1453 (EDPHGTRTSDDTPNHGCEDASDTSLLGVLPASEATK) are disordered.

In terms of tissue distribution, isoform 1 is highly expressed in the spleen, lymph nodes, thymus, and fetal liver and weakly expressed in bone marrow and no expression was found in peripheral blood leukocytes. Isoform 1 expression is restricted to the monocyte and macrophage cell lines. Isoform 2 is only expressed in spleen.

It localises to the cell membrane. The protein resides in the secreted. The protein is Scavenger receptor cysteine-rich type 1 protein M160 (CD163L1) of Homo sapiens (Human).